A 270-amino-acid chain; its full sequence is Glucosamine-6-phosphate deaminase (270 aa).

Asp-68 serves as the catalytic Proton acceptor; for enolization step. The active-site For ring-opening step is the Asp-145. Residue His-147 is the Proton acceptor; for ring-opening step of the active site. Glu-152 functions as the For ring-opening step in the catalytic mechanism.

The protein belongs to the glucosamine/galactosamine-6-phosphate isomerase family. NagB subfamily.

The enzyme catalyses alpha-D-glucosamine 6-phosphate + H2O = beta-D-fructose 6-phosphate + NH4(+). It participates in amino-sugar metabolism; N-acetylneuraminate degradation; D-fructose 6-phosphate from N-acetylneuraminate: step 5/5. Functionally, catalyzes the reversible isomerization-deamination of glucosamine 6-phosphate (GlcN6P) to form fructose 6-phosphate (Fru6P) and ammonium ion. The sequence is that of Glucosamine-6-phosphate deaminase from Bifidobacterium longum subsp. infantis (strain ATCC 15697 / DSM 20088 / JCM 1222 / NCTC 11817 / S12).